The chain runs to 461 residues: Mannan endo-1,4-beta-mannosidase 4 (461 aa).

Positions 80 and 195 each coordinate substrate. Glutamate 196 (proton donor) is an active-site residue. Tyrosine 274 contacts substrate. Glutamate 314 acts as the Nucleophile in catalysis. Tryptophan 357 and aspartate 364 together coordinate substrate.

The protein belongs to the glycosyl hydrolase 5 (cellulase A) family. As to expression, ubiquitous.

It carries out the reaction Random hydrolysis of (1-&gt;4)-beta-D-mannosidic linkages in mannans, galactomannans and glucomannans.. This Oryza sativa subsp. japonica (Rice) protein is Mannan endo-1,4-beta-mannosidase 4 (MAN4).